The following is a 134-amino-acid chain: ATP synthase epsilon chain (134 aa).

Belongs to the ATPase epsilon chain family. In terms of assembly, F-type ATPases have 2 components, CF(1) - the catalytic core - and CF(0) - the membrane proton channel. CF(1) has five subunits: alpha(3), beta(3), gamma(1), delta(1), epsilon(1). CF(0) has three main subunits: a, b and c.

The protein localises to the cell membrane. Functionally, produces ATP from ADP in the presence of a proton gradient across the membrane. This Anoxybacillus flavithermus (strain DSM 21510 / WK1) protein is ATP synthase epsilon chain.